The following is a 375-amino-acid chain: Alanine racemase (375 aa).

Lysine 41 (proton acceptor; specific for D-alanine) is an active-site residue. The residue at position 41 (lysine 41) is an N6-(pyridoxal phosphate)lysine. Arginine 141 provides a ligand contact to substrate. Tyrosine 270 (proton acceptor; specific for L-alanine) is an active-site residue. Methionine 317 is a substrate binding site.

It belongs to the alanine racemase family. Requires pyridoxal 5'-phosphate as cofactor.

It carries out the reaction L-alanine = D-alanine. Its pathway is amino-acid biosynthesis; D-alanine biosynthesis; D-alanine from L-alanine: step 1/1. Its function is as follows. Catalyzes the interconversion of L-alanine and D-alanine. May also act on other amino acids. This chain is Alanine racemase (alr), found in Lactiplantibacillus plantarum (strain ATCC BAA-793 / NCIMB 8826 / WCFS1) (Lactobacillus plantarum).